We begin with the raw amino-acid sequence, 402 residues long: MKKIVAIFLVFLGSLWAEDPVIDVVNSGVVLPKIIVKDNSNLSDENLKKSFYNIIVNDLKVSSNFEVVANATETSNYIFEYTLNKNGNTLSLNVKIKAGGSDKSEQTYTLNGLEQYPFLAHKSVKASVNALGLAPVDWMDHKILIARNSSSKKSQIIMADYTLTYQKVIVDGGLNLFPKWGNKEQTLFYYTAYDHDKPTLYRYDLNTNKASKILSSGGMVVASDVNVDGSKLLVTMAPKDQPDVYLYDLNTKNLTQLTNYSGIDVNGNFIGSDDSKVVFVSDRLGYPNIFMQDLNSNSAEQVVFHGRNNSAVSTYKDFLVYSSREPNQAGVFNIYLMSINSDYIRQLTANGKNLFPRFSSDGGSIVFIKYLGAQSALGVIRVNANKTFYFPLRVGKIQSIDW.

An N-terminal signal peptide occupies residues 1 to 17 (MKKIVAIFLVFLGSLWA).

The protein belongs to the TolB family. The Tol-Pal system is composed of five core proteins: the inner membrane proteins TolA, TolQ and TolR, the periplasmic protein TolB and the outer membrane protein Pal. They form a network linking the inner and outer membranes and the peptidoglycan layer.

The protein localises to the periplasm. In terms of biological role, part of the Tol-Pal system, which plays a role in outer membrane invagination during cell division and is important for maintaining outer membrane integrity. This chain is Tol-Pal system protein TolB, found in Campylobacter jejuni subsp. jejuni serotype O:2 (strain ATCC 700819 / NCTC 11168).